Here is a 144-residue protein sequence, read N- to C-terminus: Small ribosomal subunit protein uS19 (144 aa).

Belongs to the universal ribosomal protein uS19 family.

Protein S19 forms a complex with S13 that binds strongly to the 16S ribosomal RNA. This Hyperthermus butylicus (strain DSM 5456 / JCM 9403 / PLM1-5) protein is Small ribosomal subunit protein uS19.